Here is a 425-residue protein sequence, read N- to C-terminus: Serine--tRNA ligase (425 aa).

230–232 lines the L-serine pocket; the sequence is TAE. Residue 261 to 263 participates in ATP binding; sequence RAE. Glu284 lines the L-serine pocket. Residue 348 to 351 participates in ATP binding; that stretch reads EISS. An L-serine-binding site is contributed by Ser384.

Belongs to the class-II aminoacyl-tRNA synthetase family. Type-1 seryl-tRNA synthetase subfamily. In terms of assembly, homodimer. The tRNA molecule binds across the dimer.

The protein localises to the cytoplasm. It carries out the reaction tRNA(Ser) + L-serine + ATP = L-seryl-tRNA(Ser) + AMP + diphosphate + H(+). It catalyses the reaction tRNA(Sec) + L-serine + ATP = L-seryl-tRNA(Sec) + AMP + diphosphate + H(+). It functions in the pathway aminoacyl-tRNA biosynthesis; selenocysteinyl-tRNA(Sec) biosynthesis; L-seryl-tRNA(Sec) from L-serine and tRNA(Sec): step 1/1. In terms of biological role, catalyzes the attachment of serine to tRNA(Ser). Is also able to aminoacylate tRNA(Sec) with serine, to form the misacylated tRNA L-seryl-tRNA(Sec), which will be further converted into selenocysteinyl-tRNA(Sec). The protein is Serine--tRNA ligase of Desulforudis audaxviator (strain MP104C).